A 467-amino-acid polypeptide reads, in one-letter code: MKIRTRYAPSPTGFLHIGGARTALFNYLFAKHHNGDFILRIEDSDNSRNIKDGEKSQIENLLWLGIIPDEKPGSETKFGPYRQSEKLERYQKLAQELIKKGFAYYAFDNQEELKLQKKEQIAKGIFSFRYDQNWLKISDQEKQKRLKNKHFVIRFKVDKAKNFCWNDLVRGQICFEGSAISDWVIIKSDGFPTYNFAVVVDDFDMEISHIFRGEEHISNTPKQIGIYQAFNWKTPKFGHLTIITDKNGKKLSKRDKNLFQFIEDYKNQGYHSEAFFNFLALLGWTSPDSQEFFDHKSLIKAFDYKRLSKAPSHFDIEKLNWFSKSYISKMPVDKILENLELSDNQIWNRFFVETFQKSSIKYADFYKNFEFFHRPKQEMDEKMLEIFEKLDKKPVKIFASKIDYQNWDYTKINDLIKEIGQKLEITGKNLLLPIRLATTFTNSGPELARAIWLLGKKIIEKRLLKWK.

A 'HIGH' region motif is present at residues Pro9–Gly19. Positions Lys250–Arg254 match the 'KMSKS' region motif. Lys253 is an ATP binding site.

Belongs to the class-I aminoacyl-tRNA synthetase family. Glutamate--tRNA ligase type 1 subfamily. In terms of assembly, monomer.

Its subcellular location is the cytoplasm. It carries out the reaction tRNA(Glu) + L-glutamate + ATP = L-glutamyl-tRNA(Glu) + AMP + diphosphate. Its function is as follows. Catalyzes the attachment of glutamate to tRNA(Glu) in a two-step reaction: glutamate is first activated by ATP to form Glu-AMP and then transferred to the acceptor end of tRNA(Glu). The protein is Glutamate--tRNA ligase of Mesomycoplasma hyopneumoniae (strain J / ATCC 25934 / NCTC 10110) (Mycoplasma hyopneumoniae).